A 140-amino-acid chain; its full sequence is Large ribosomal subunit protein uL11 (140 aa).

Belongs to the universal ribosomal protein uL11 family. Part of the ribosomal stalk of the 50S ribosomal subunit. Interacts with L10 and the large rRNA to form the base of the stalk. L10 forms an elongated spine to which L12 dimers bind in a sequential fashion forming a multimeric L10(L12)X complex. Post-translationally, one or more lysine residues are methylated.

In terms of biological role, forms part of the ribosomal stalk which helps the ribosome interact with GTP-bound translation factors. This chain is Large ribosomal subunit protein uL11, found in Staphylococcus aureus (strain Mu3 / ATCC 700698).